Here is a 93-residue protein sequence, read N- to C-terminus: Large ribosomal subunit protein uL23cz/uL23cy (93 aa).

This sequence belongs to the universal ribosomal protein uL23 family. As to quaternary structure, part of the 50S ribosomal subunit.

Its subcellular location is the plastid. It localises to the chloroplast. Functionally, binds to 23S rRNA. The protein is Large ribosomal subunit protein uL23cz/uL23cy (rpl23-A) of Lactuca sativa (Garden lettuce).